The primary structure comprises 355 residues: Peptide chain release factor 1 (355 aa).

The residue at position 233 (Gln233) is an N5-methylglutamine.

This sequence belongs to the prokaryotic/mitochondrial release factor family. Post-translationally, methylated by PrmC. Methylation increases the termination efficiency of RF1.

Its subcellular location is the cytoplasm. Peptide chain release factor 1 directs the termination of translation in response to the peptide chain termination codons UAG and UAA. The protein is Peptide chain release factor 1 of Bacillus cereus (strain ATCC 14579 / DSM 31 / CCUG 7414 / JCM 2152 / NBRC 15305 / NCIMB 9373 / NCTC 2599 / NRRL B-3711).